We begin with the raw amino-acid sequence, 403 residues long: Betaine--homocysteine S-methyltransferase 1 (403 aa).

The 304-residue stretch at 8 to 311 (KGLLERLDAG…YHTRAIAEEL (304 aa)) folds into the Hcy-binding domain. Residues cysteine 214, cysteine 296, and cysteine 297 each contribute to the Zn(2+) site.

As to quaternary structure, homotetramer. Zn(2+) serves as cofactor.

It is found in the cytoplasm. It carries out the reaction L-homocysteine + glycine betaine = N,N-dimethylglycine + L-methionine. It functions in the pathway amine and polyamine degradation; betaine degradation; sarcosine from betaine: step 1/2. It participates in amino-acid biosynthesis; L-methionine biosynthesis via de novo pathway; L-methionine from L-homocysteine (BhmT route): step 1/1. Its function is as follows. Involved in the regulation of homocysteine metabolism. Converts betaine and homocysteine to dimethylglycine and methionine, respectively. This reaction is also required for the irreversible oxidation of choline. The polypeptide is Betaine--homocysteine S-methyltransferase 1 (bhmt) (Xenopus tropicalis (Western clawed frog)).